A 601-amino-acid chain; its full sequence is Serine/threonine-protein phosphatase 2A 65 kDa regulatory subunit A beta isoform (601 aa).

N-acetylalanine is present on Ala2. HEAT repeat units follow at residues 20-58 (DSLY…GVER), 59-96 (TRTE…GGPD), 97-135 (FAHC…TPVA), 136-173 (LEAH…ASNA), 174-212 (VKAE…ELDS), 213-251 (VKTE…SQDD), 252-290 (LEAL…GPKI), 291-333 (ALSD…RETV), 334-372 (IMNQ…GKEN), 373-411 (TIEH…GIRQ), 412-450 (LSQS…GVEF), 451-489 (FDEK…GTEW), 490-528 (AQNT…GKEI), 529-567 (TTKQ…DTNA), and 568-601 (LQGE…LALA).

It belongs to the phosphatase 2A regulatory subunit A family. As to quaternary structure, PP2A consists of a common heterodimeric core enzyme, composed of a 36 kDa catalytic subunit (subunit C) and a 65 kDa constant regulatory subunit (PR65 or subunit A), that associates with a variety of regulatory subunits. Proteins that associate with the core dimer include three families of regulatory subunits B (the R2/B/PR55/B55, R3/B''/PR72/PR130/PR59 and R5/B'/B56 families), the 48 kDa variable regulatory subunit, viral proteins, and cell signaling molecules. Interacts with IPO9. Interacts with SGO1. Interacts with RAF1.

Its function is as follows. The PR65 subunit of protein phosphatase 2A serves as a scaffolding molecule to coordinate the assembly of the catalytic subunit and a variable regulatory B subunit. The sequence is that of Serine/threonine-protein phosphatase 2A 65 kDa regulatory subunit A beta isoform (Ppp2r1b) from Rattus norvegicus (Rat).